A 541-amino-acid polypeptide reads, in one-letter code: Tripeptidyl aminopeptidase (541 aa).

The first 36 residues, 1–36, serve as a signal peptide directing secretion; that stretch reads MRKSSIRRRATAFGTAGALVTATLIAGAVSAPAASA. Positions 37-39 are excised as a propeptide; the sequence is APA. In terms of domain architecture, AB hydrolase-1 spans 123 to 501; the sequence is GALIYNPGGP…SRLITERDAG (379 aa). The active-site Nucleophile is the Ser-249. The active site involves Asp-474. The Proton donor role is filled by His-503.

This sequence belongs to the peptidase S33 family.

Its subcellular location is the secreted. Cleaves tripeptides from the N-termini of proteins. Does not cleave mono- or dipeptides, or N-terminally blocked peptides. This Streptomyces coelicolor (strain ATCC BAA-471 / A3(2) / M145) protein is Tripeptidyl aminopeptidase.